The chain runs to 239 residues: C-8 sterol isomerase erg2 (239 aa).

Asn-11 carries an N-linked (GlcNAc...) asparagine glycan. Residues 27 to 47 (KFGFLAVFVAIFAALYSYLDA) traverse the membrane as a helical segment. A glycan (N-linked (GlcNAc...) asparagine) is linked at Asn-73.

Belongs to the ERG2 family.

The protein resides in the endoplasmic reticulum membrane. It catalyses the reaction fecosterol = episterol. Its pathway is steroid metabolism; ergosterol biosynthesis. In terms of biological role, C-8 sterol isomerase; part of the third module of ergosterol biosynthesis pathway that includes the late steps of the pathway. Erg2 catalyzes the reaction which results in unsaturation at C-7 in the B ring of sterols and thus converts fecosterol to episterol. The third module or late pathway involves the ergosterol synthesis itself through consecutive reactions that mainly occur in the endoplasmic reticulum (ER) membrane. Firstly, the squalene synthase erg9 catalyzes the condensation of 2 farnesyl pyrophosphate moieties to form squalene, which is the precursor of all steroids. Squalene synthase is crucial for balancing the incorporation of farnesyl diphosphate (FPP) into sterol and nonsterol isoprene synthesis. Secondly, squalene is converted into lanosterol by the consecutive action of the squalene epoxidase erg1 and the lanosterol synthase erg7. Then, the delta(24)-sterol C-methyltransferase erg6 methylates lanosterol at C-24 to produce eburicol. Eburicol is the substrate of the sterol 14-alpha demethylase encoded by cyp51A and cyp51B, to yield 4,4,24-trimethyl ergosta-8,14,24(28)-trienol. The C-14 reductase erg24 then reduces the C14=C15 double bond which leads to 4,4-dimethylfecosterol. A sequence of further demethylations at C-4, involving the C-4 demethylation complex containing the C-4 methylsterol oxidases erg25A or erg25B, the sterol-4-alpha-carboxylate 3-dehydrogenase erg26 and the 3-keto-steroid reductase erg27, leads to the production of fecosterol via 4-methylfecosterol. The C-8 sterol isomerase erg2 then catalyzes the reaction which results in unsaturation at C-7 in the B ring of sterols and thus converts fecosterol to episterol. The sterol-C5-desaturase erg3B then catalyzes the introduction of a C-5 double bond in the B ring to produce 5-dehydroepisterol. The 2 other sterol-C5-desaturases, erg3A and erg3C, seem to be less important in ergosterol biosynthesis. The C-22 sterol desaturase erg5 further converts 5-dehydroepisterol into ergosta-5,7,22,24(28)-tetraen-3beta-ol by forming the C-22(23) double bond in the sterol side chain. Finally, ergosta-5,7,22,24(28)-tetraen-3beta-ol is substrate of the C-24(28) sterol reductases erg4A and erg4B to produce ergosterol. Possible alternative sterol biosynthetic pathways might exist from fecosterol to ergosterol, depending on the activities of the erg3 isoforms. The polypeptide is C-8 sterol isomerase erg2 (Aspergillus fumigatus (strain ATCC MYA-4609 / CBS 101355 / FGSC A1100 / Af293) (Neosartorya fumigata)).